An 833-amino-acid polypeptide reads, in one-letter code: Neuronal tyrosine-phosphorylated phosphoinositide-3-kinase adapter 1 (833 aa).

Disordered stretches follow at residues 1–45 (MNLL…PGVR), 64–191 (PASQ…LQRL), 219–423 (VFRG…RELP), 645–674 (EEDGARAWNGSTEGPGKVEHEDRGPVPSGI), and 736–765 (HTPRPCSQPRDALSQTHPVLPLPLPPQPAR). Positions 8 to 25 (TKLEWRQHKEEEAKRSSS) are enriched in basic and acidic residues. The tract at residues 76 to 181 (STMAPRSLSC…DESCAPAPSP (106 aa)) is involved in CYFIP1- and NCKAP1-binding. The span at 111–120 (PPAKPRRHPS) shows a compositional bias: basic residues. Residues 162–171 (SPNTQLSVSF) are compositionally biased toward polar residues. The span at 220 to 239 (FRGGGRSGGGLAGPPLGSGG) shows a compositional bias: gly residues. A compositionally biased stretch (acidic residues) spans 248–257 (SDSEDSEAIY). The segment covering 275-285 (GPPPLTAPSPP) has biased composition (pro residues).

Belongs to the NYAP family. Interacts with ACOT9, ARHGAP26 and PIK3R2. Interacts with components of the WAVE1 complex, CYFIP1 and NCKAP1; this interaction mediates PI3K-WAVE1 association and actin cytoskeleton remodeling. Phosphorylated on tyrosine residues by FYN upon stimulation with CNTN5. Phosphorylation begins at 14 dpc, reaches a peak during perinatal days in brain, then gradually decreases. As to expression, expressed predominantly in brain where it is present in the neurons, but not in astrocytes or oligodendrites.

In terms of biological role, activates PI3K and concomitantly recruits the WAVE1 complex to the close vicinity of PI3K and regulates neuronal morphogenesis. The chain is Neuronal tyrosine-phosphorylated phosphoinositide-3-kinase adapter 1 (Nyap1) from Mus musculus (Mouse).